The following is a 634-amino-acid chain: 1-phosphatidylinositol 4,5-bisphosphate phosphodiesterase zeta-1 (634 aa).

The EF-hand domain occupies 35–70 (CNTIHVKYIFKDNDRLKQGRITIEEFRTIYRIITYR). The region spanning 155 to 299 (QDMTHPLTDY…LKFKILVRNK (145 aa)) is the PI-PLC X-box domain. Active-site residues include histidine 170 and histidine 215. The segment at 312-345 (GSDMHGKVEEFEEEEEIEQEEDGSGAKEPEPVGD) is disordered. Positions 321-334 (EFEEEEEIEQEEDG) are enriched in acidic residues. A PI-PLC Y-box domain is found at 376–492 (LSDLVIYTKV…GYVLKPRFLR (117 aa)). The C2 domain maps to 492–615 (RDKKTKFNPH…RGYRRVPLFS (124 aa)).

In terms of assembly, interacts (via its C2 domain) with PtdIns(3)P and, to a lesser extent, PtdIns(5)P in vitro. The cofactor is Ca(2+).

It localises to the nucleus. Its subcellular location is the cytoplasm. The protein resides in the perinuclear region. It catalyses the reaction a 1,2-diacyl-sn-glycero-3-phospho-(1D-myo-inositol-4,5-bisphosphate) + H2O = 1D-myo-inositol 1,4,5-trisphosphate + a 1,2-diacyl-sn-glycerol + H(+). Functionally, the production of the second messenger molecules diacylglycerol (DAG) and inositol 1,4,5-trisphosphate (IP3) is mediated by activated phosphatidylinositol-specific phospholipase C enzymes. In vitro, hydrolyzes PtdIns(4,5)P2 in a Ca(2+)-dependent manner. Triggers intracellular Ca(2+) oscillations in oocytes solely during M phase and is involved in inducing oocyte activation and initiating embryonic development up to the blastocyst stage. Is therefore a strong candidate for the egg-activating soluble sperm factor that is transferred from the sperm into the egg cytoplasm following gamete membrane fusion. May exert an inhibitory effect on phospholipase-C-coupled processes that depend on calcium ions and protein kinase C, including CFTR trafficking and function. The polypeptide is 1-phosphatidylinositol 4,5-bisphosphate phosphodiesterase zeta-1 (Bos taurus (Bovine)).